The chain runs to 83 residues: Small ribosomal subunit protein bS20 (83 aa).

The protein belongs to the bacterial ribosomal protein bS20 family.

Functionally, binds directly to 16S ribosomal RNA. This Leuconostoc citreum (strain KM20) protein is Small ribosomal subunit protein bS20.